The sequence spans 709 residues: Twinkle homolog protein, chloroplastic/mitochondrial (709 aa).

The transit peptide at 1 to 16 directs the protein to the chloroplast and mitochondrion; the sequence is MRFLLRLPQIHFRKLS. The Toprim domain maps to 280-385; it reads SEVIIVEGEI…KKSEDEHFKD (106 aa). Mg(2+) is bound by residues glutamate 286, aspartate 348, and aspartate 350. Residues 430–698 form the SF4 helicase domain; it reads THGHEYGVST…GSYSDSPVTP (269 aa). 460-467 contributes to the ATP binding site; it reads GIPNSGKS.

It depends on Mg(2+) as a cofactor. As to expression, expressed in young leaves and shoot apex tissues. Detected in developing tissues such as cotyledons, sepals, pistils and inflorescences. Nearly undetectable in mature leaves.

The protein localises to the plastid. Its subcellular location is the chloroplast. The protein resides in the mitochondrion. The enzyme catalyses ATP + H2O = ADP + phosphate + H(+). Has both DNA primase and DNA helicase activities and may be involved in organelle DNA replication. Capable of producing RNA primers of 9 to 18 bases from a single-stranded DNA template. This is Twinkle homolog protein, chloroplastic/mitochondrial from Arabidopsis thaliana (Mouse-ear cress).